Consider the following 203-residue polypeptide: Outer-membrane lipoprotein carrier protein (203 aa).

The N-terminal stretch at 1 to 21 is a signal peptide; that stretch reads MKKLIISCCLLATFSAAGAWA. The disordered stretch occupies residues 174–203; sequence ALKSQQSGPISADKFKFRPPKGVTVDDQRQ.

It belongs to the LolA family. In terms of assembly, monomer.

It is found in the periplasm. In terms of biological role, participates in the translocation of lipoproteins from the inner membrane to the outer membrane. Only forms a complex with a lipoprotein if the residue after the N-terminal Cys is not an aspartate (The Asp acts as a targeting signal to indicate that the lipoprotein should stay in the inner membrane). The protein is Outer-membrane lipoprotein carrier protein of Erwinia tasmaniensis (strain DSM 17950 / CFBP 7177 / CIP 109463 / NCPPB 4357 / Et1/99).